A 465-amino-acid polypeptide reads, in one-letter code: Putative multidrug resistance protein MdtD (465 aa).

12 helical membrane passes run 12–32 (LWIV…VNTA), 49–69 (SVIV…GWLA), 72–92 (IGVK…SLMC), 138–158 (FVTL…GFLV), 165–185 (WIFL…LLLM), 195–215 (FDIS…LALD), 219–239 (GLGL…IALG), 267–287 (LVGS…TPIF), 290–310 (IGLG…IIGS), 329–351 (VLVN…AIMG), 393–413 (LLSM…GILL), and 430–450 (SAFL…ALIF).

Belongs to the major facilitator superfamily. TCR/Tet family.

It localises to the cell inner membrane. In Yersinia pseudotuberculosis serotype I (strain IP32953), this protein is Putative multidrug resistance protein MdtD.